Reading from the N-terminus, the 25-residue chain is M-poneritoxin-Na1b (25 aa).

Belongs to the non-disulfide-bridged peptide (NDBP) superfamily. Medium-length antimicrobial peptide (group 3) family. Ponericin-W subfamily. Expressed by the venom gland.

It localises to the secreted. The protein localises to the target cell membrane. Membrane-perturbating peptide with multiple activities. It is insecticidal, since it induces reversible paralysis in insects (L.cuprina) after 1 hour, but fails to kill flies. It shows a relatively strong and broad-spectrum antibacterial activity against both Gram-positive and Gram-negative bacteria (MIC&lt;20 uM). It is also anthelmintic, since it potently inhibits the larval development of the major pathogenic nematode of ruminants (H.contortus, IC(50)=2.8 uM). Interestingly, only at 10 uM, it increases adult males motility of the other nematode B.malayi for 24 hours post-treatment, followed by a reduction in motility for the rest of the experiment. It shows cytotoxic activity against HEK293 cells (EC(50)=4-6 uM) and induces hemolysis in human erythrocytes (EC(50)=40-62 uM). In addition, it causes an important increase in intracellular calcium concentration on neuronal and epithelial cell lines, which supports a non-specific membrane perturbation mechanism of action. In vivo, it induces pain by intraplantar injection into mice, suggesting a defensive function against vertebrate predators. The sequence is that of M-poneritoxin-Na1b from Neoponera apicalis (Ant).